Reading from the N-terminus, the 174-residue chain is Eukaryotic translation elongation factor 1 epsilon-1 (174 aa).

A2 carries the post-translational modification N-acetylalanine. The segment at 2 to 56 (AAAAELRLLEKSLGLKPGNKYSAQGERQIPVLQTNNGPSLMGLSTIATHLVKQAS) is N-terminal. Residues 50–173 (HLVKQASKEH…FIKNRLYANS (124 aa)) form the GST C-terminal domain. Residues 57 to 63 (KEHLLGS) form a linker region. A C-terminal region spans residues 64 to 152 (TAEEKAMVQQ…SRWFCHIQHY (89 aa)). K138 is subject to N6-acetyllysine. The stretch at 153–169 (PDIRQHLSSIVFIKNRL) forms a coiled coil.

As to quaternary structure, part of a multisubunit complex that groups tRNA ligases for Arg (RARS1), Asp (DARS1), Gln (QARS1), Ile (IARS1), Leu (LARS1), Lys (KARS1), Met (MARS1) the bifunctional ligase for Glu and Pro (EPRS1) and the auxiliary subunits AIMP1/p43, AIMP2/p38 and EEF1E1/p18. Can interact simultaneously with MARS1 and EPRS1. Forms a linear complex that contains MARS1, EEF1E1, EPRS1 and AIMP2 that is at the core of the multisubunit complex. Interacts with ATM and ATR. The interaction with ATM, which takes place independently of TP53, is induced by DNA damage that may occur during genotoxic stress or cell growth. The interaction with ATR is enhanced by UV irradiation.

It localises to the cytoplasm. Its subcellular location is the nucleus. Functionally, positive modulator of ATM response to DNA damage. This chain is Eukaryotic translation elongation factor 1 epsilon-1 (Eef1e1), found in Mus musculus (Mouse).